The sequence spans 346 residues: Protein RecA (346 aa).

Residue 66 to 73 (GPESSGKT) coordinates ATP.

It belongs to the RecA family.

The protein resides in the cytoplasm. Can catalyze the hydrolysis of ATP in the presence of single-stranded DNA, the ATP-dependent uptake of single-stranded DNA by duplex DNA, and the ATP-dependent hybridization of homologous single-stranded DNAs. It interacts with LexA causing its activation and leading to its autocatalytic cleavage. The chain is Protein RecA from Aromatoleum aromaticum (strain DSM 19018 / LMG 30748 / EbN1) (Azoarcus sp. (strain EbN1)).